The chain runs to 157 residues: Arginine regulator (157 aa).

The protein belongs to the ArgR family.

It is found in the cytoplasm. It participates in amino-acid degradation; L-arginine degradation via ADI pathway. Regulates the transcription of the arc operon, involved in arginine catabolism. This chain is Arginine regulator (argR1), found in Streptococcus pyogenes serotype M3 (strain SSI-1).